The primary structure comprises 473 residues: ATP synthase subunit beta (473 aa).

Position 158–165 (158–165) interacts with ATP; it reads GGAGVGKT.

The protein belongs to the ATPase alpha/beta chains family. In terms of assembly, F-type ATPases have 2 components, CF(1) - the catalytic core - and CF(0) - the membrane proton channel. CF(1) has five subunits: alpha(3), beta(3), gamma(1), delta(1), epsilon(1). CF(0) has three main subunits: a(1), b(2) and c(9-12). The alpha and beta chains form an alternating ring which encloses part of the gamma chain. CF(1) is attached to CF(0) by a central stalk formed by the gamma and epsilon chains, while a peripheral stalk is formed by the delta and b chains.

Its subcellular location is the cell membrane. The enzyme catalyses ATP + H2O + 4 H(+)(in) = ADP + phosphate + 5 H(+)(out). Produces ATP from ADP in the presence of a proton gradient across the membrane. The catalytic sites are hosted primarily by the beta subunits. This chain is ATP synthase subunit beta, found in Anoxybacillus flavithermus (strain DSM 21510 / WK1).